The primary structure comprises 301 residues: Oxygen-dependent coproporphyrinogen-III oxidase (301 aa).

A substrate-binding site is contributed by serine 90. A divalent metal cation-binding residues include histidine 94 and histidine 104. Histidine 104 (proton donor) is an active-site residue. Residue 106-108 (NVR) coordinates substrate. Residues histidine 143 and histidine 173 each coordinate a divalent metal cation. The tract at residues 238 to 273 (YVEFNLVWDRGTLFGLQSGGRTESILMSLPPIVKWR) is important for dimerization. 256–258 (GGR) lines the substrate pocket.

It belongs to the aerobic coproporphyrinogen-III oxidase family. As to quaternary structure, homodimer. A divalent metal cation serves as cofactor.

It is found in the cytoplasm. The enzyme catalyses coproporphyrinogen III + O2 + 2 H(+) = protoporphyrinogen IX + 2 CO2 + 2 H2O. The protein operates within porphyrin-containing compound metabolism; protoporphyrin-IX biosynthesis; protoporphyrinogen-IX from coproporphyrinogen-III (O2 route): step 1/1. Functionally, involved in the heme biosynthesis. Catalyzes the aerobic oxidative decarboxylation of propionate groups of rings A and B of coproporphyrinogen-III to yield the vinyl groups in protoporphyrinogen-IX. The polypeptide is Oxygen-dependent coproporphyrinogen-III oxidase (Nitrosomonas eutropha (strain DSM 101675 / C91 / Nm57)).